Here is a 70-residue protein sequence, read N- to C-terminus: Conotoxin Im23.4 (70 aa).

A signal peptide spans 1–22 (MIMRMTLTLFVLVVMTAASASG). The propeptide occupies 23 to 30 (DALTEAKR). Disulfide bonds link cysteine 34–cysteine 41, cysteine 45–cysteine 53, and cysteine 54–cysteine 69.

The protein belongs to the conotoxin K superfamily. As to expression, expressed by the venom duct.

Its subcellular location is the secreted. Functionally, probable neurotoxin. In Conus imperialis (Imperial cone), this protein is Conotoxin Im23.4.